Reading from the N-terminus, the 512-residue chain is 2-isopropylmalate synthase (512 aa).

A Pyruvate carboxyltransferase domain is found at 4–266; it reads IQFFDTTLRD…ETNIVLNQFK (263 aa). Mn(2+) contacts are provided by aspartate 13, histidine 201, histidine 203, and asparagine 237. Residues 390 to 512 form a regulatory domain region; sequence ELKHLQVQYV…SKQADFEEVK (123 aa).

The protein belongs to the alpha-IPM synthase/homocitrate synthase family. LeuA type 1 subfamily. As to quaternary structure, homodimer. Mn(2+) is required as a cofactor.

It is found in the cytoplasm. The catalysed reaction is 3-methyl-2-oxobutanoate + acetyl-CoA + H2O = (2S)-2-isopropylmalate + CoA + H(+). Its pathway is amino-acid biosynthesis; L-leucine biosynthesis; L-leucine from 3-methyl-2-oxobutanoate: step 1/4. Catalyzes the condensation of the acetyl group of acetyl-CoA with 3-methyl-2-oxobutanoate (2-ketoisovalerate) to form 3-carboxy-3-hydroxy-4-methylpentanoate (2-isopropylmalate). The protein is 2-isopropylmalate synthase of Listeria monocytogenes serotype 4a (strain HCC23).